We begin with the raw amino-acid sequence, 157 residues long: Capsid protein (157 aa).

The residue at position 2 (serine 2) is an N-acetylserine; by host.

The protein belongs to the virgaviridae capsid protein family.

The protein localises to the virion. In terms of biological role, capsid protein self-assembles to form rod-shaped virions about 18 nm in diameter with a central canal enclosing the viral genomic RNA. This chain is Capsid protein (CP), found in Ribgrass mosaic virus (RMV).